Reading from the N-terminus, the 308-residue chain is ATP synthase gamma chain (308 aa).

This sequence belongs to the ATPase gamma chain family. As to quaternary structure, F-type ATPases have 2 components, CF(1) - the catalytic core - and CF(0) - the membrane proton channel. CF(1) has five subunits: alpha(3), beta(3), gamma(1), delta(1), epsilon(1). CF(0) has three main subunits: a, b and c.

It localises to the cell inner membrane. Its function is as follows. Produces ATP from ADP in the presence of a proton gradient across the membrane. The gamma chain is believed to be important in regulating ATPase activity and the flow of protons through the CF(0) complex. This chain is ATP synthase gamma chain, found in Bartonella tribocorum (strain CIP 105476 / IBS 506).